The chain runs to 125 residues: Mitochondrial import inner membrane translocase subunit TIM16 (125 aa).

Positions 58–110 (EAQQILNVSKLSPEEVQKNYEHLFKVNDKSVGGSFYLQSKVVRAKERLDEELR) are J-like. At Ser-69 the chain carries Phosphoserine.

This sequence belongs to the TIM16/PAM16 family. Probable component of the PAM complex at least composed of a mitochondrial HSP70 protein, GRPEL1 or GRPEL2, TIMM44, TIMM16/PAM16 and TIMM14/DNAJC19. Interacts with DNAJC19. Directly interacts with DNAJC15; this interaction counteracts DNAJC15-dependent stimulation of HSPA9 ATPase activity. Associates with the TIM23 complex. Expressed in trabecular bone and cartilage and by differentiated chondrocytes localized in the hypertrophic zone and by osteoblasts at early developmental stages.

Its subcellular location is the mitochondrion inner membrane. In terms of biological role, regulates ATP-dependent protein translocation into the mitochondrial matrix. Inhibits DNAJC19 stimulation of HSPA9/Mortalin ATPase activity. The chain is Mitochondrial import inner membrane translocase subunit TIM16 from Mus musculus (Mouse).